The chain runs to 297 residues: D-aminoacyl-tRNA deacylase (297 aa).

Belongs to the DtdA deacylase family. Monomer. Zn(2+) is required as a cofactor.

It carries out the reaction a D-aminoacyl-tRNA + H2O = a tRNA + a D-alpha-amino acid + H(+). The enzyme catalyses glycyl-tRNA(Ala) + H2O = tRNA(Ala) + glycine + H(+). Functionally, D-aminoacyl-tRNA deacylase with broad substrate specificity. By recycling D-aminoacyl-tRNA to D-amino acids and free tRNA molecules, this enzyme counteracts the toxicity associated with the formation of D-aminoacyl-tRNA entities in vivo. This chain is D-aminoacyl-tRNA deacylase, found in Methanosarcina acetivorans (strain ATCC 35395 / DSM 2834 / JCM 12185 / C2A).